Consider the following 521-residue polypeptide: Type-2 serine--tRNA ligase (521 aa).

Ala-316 contributes to the L-serine binding site. Position 318 (Cys-318) interacts with Zn(2+). Residue Arg-347 coordinates L-serine. Residues 347 to 349 (RWE) and 358 to 359 (RV) each bind ATP. 364-366 (RVE) is an L-serine binding site. Positions 366 and 473 each coordinate Zn(2+). Arg-480 contributes to the ATP binding site.

This sequence belongs to the class-II aminoacyl-tRNA synthetase family. Type-2 seryl-tRNA synthetase subfamily. Homodimer. The cofactor is Zn(2+).

It localises to the cytoplasm. The catalysed reaction is tRNA(Ser) + L-serine + ATP = L-seryl-tRNA(Ser) + AMP + diphosphate + H(+). It carries out the reaction tRNA(Sec) + L-serine + ATP = L-seryl-tRNA(Sec) + AMP + diphosphate + H(+). It functions in the pathway aminoacyl-tRNA biosynthesis; selenocysteinyl-tRNA(Sec) biosynthesis; L-seryl-tRNA(Sec) from L-serine and tRNA(Sec): step 1/1. Catalyzes the attachment of serine to tRNA(Ser). Is also able to aminoacylate tRNA(Sec) with serine, to form the misacylated tRNA L-seryl-tRNA(Sec), which will be further converted into selenocysteinyl-tRNA(Sec). The chain is Type-2 serine--tRNA ligase (serS) from Methanocaldococcus jannaschii (strain ATCC 43067 / DSM 2661 / JAL-1 / JCM 10045 / NBRC 100440) (Methanococcus jannaschii).